Consider the following 456-residue polypeptide: Bifunctional protein GlmU (456 aa).

The segment at 1 to 229 (MLNNAMSVVI…LSEVEGVNNR (229 aa)) is pyrophosphorylase. Residues 11–14 (LAAG), K25, Q76, 81–82 (GT), 103–105 (YGD), G140, E154, N169, and N227 contribute to the UDP-N-acetyl-alpha-D-glucosamine site. Residue D105 participates in Mg(2+) binding. N227 contributes to the Mg(2+) binding site. The segment at 230-250 (LQLSRLERVYQSEQAEKLLLA) is linker. Residues 251 to 456 (GVMLRDPARF…EGWRRPVKKK (206 aa)) are N-acetyltransferase. R333 and K351 together coordinate UDP-N-acetyl-alpha-D-glucosamine. The active-site Proton acceptor is H363. UDP-N-acetyl-alpha-D-glucosamine contacts are provided by Y366 and N377. Residues A380, 386–387 (NY), S405, A423, and R440 contribute to the acetyl-CoA site.

It in the N-terminal section; belongs to the N-acetylglucosamine-1-phosphate uridyltransferase family. The protein in the C-terminal section; belongs to the transferase hexapeptide repeat family. In terms of assembly, homotrimer. Requires Mg(2+) as cofactor.

The protein resides in the cytoplasm. It catalyses the reaction alpha-D-glucosamine 1-phosphate + acetyl-CoA = N-acetyl-alpha-D-glucosamine 1-phosphate + CoA + H(+). It carries out the reaction N-acetyl-alpha-D-glucosamine 1-phosphate + UTP + H(+) = UDP-N-acetyl-alpha-D-glucosamine + diphosphate. The protein operates within nucleotide-sugar biosynthesis; UDP-N-acetyl-alpha-D-glucosamine biosynthesis; N-acetyl-alpha-D-glucosamine 1-phosphate from alpha-D-glucosamine 6-phosphate (route II): step 2/2. It participates in nucleotide-sugar biosynthesis; UDP-N-acetyl-alpha-D-glucosamine biosynthesis; UDP-N-acetyl-alpha-D-glucosamine from N-acetyl-alpha-D-glucosamine 1-phosphate: step 1/1. It functions in the pathway bacterial outer membrane biogenesis; LPS lipid A biosynthesis. In terms of biological role, catalyzes the last two sequential reactions in the de novo biosynthetic pathway for UDP-N-acetylglucosamine (UDP-GlcNAc). The C-terminal domain catalyzes the transfer of acetyl group from acetyl coenzyme A to glucosamine-1-phosphate (GlcN-1-P) to produce N-acetylglucosamine-1-phosphate (GlcNAc-1-P), which is converted into UDP-GlcNAc by the transfer of uridine 5-monophosphate (from uridine 5-triphosphate), a reaction catalyzed by the N-terminal domain. The chain is Bifunctional protein GlmU from Shigella dysenteriae serotype 1 (strain Sd197).